The chain runs to 164 residues: UBA-like domain-containing protein 2 (164 aa).

An N-acetylserine modification is found at Ser2. Positions 128–164 (SSPTTFHHLHRPQPTWPPGAQQGGAQQKAMAAMDGQR) are disordered. Over residues 146 to 164 (GAQQGGAQQKAMAAMDGQR) the composition is skewed to low complexity.

It belongs to the UBALD family.

The polypeptide is UBA-like domain-containing protein 2 (UBALD2) (Homo sapiens (Human)).